The chain runs to 301 residues: Protein FAM221A (301 aa).

A disordered region spans residues 235–271; the sequence is MHAPSTSSPQPLAGGNEVGPSTQLSSLRKPEEDDMAY.

The protein belongs to the FAM221 family.

This chain is Protein FAM221A (Fam221a), found in Mus musculus (Mouse).